The following is a 95-amino-acid chain: Aspartyl/glutamyl-tRNA(Asn/Gln) amidotransferase subunit C (95 aa).

Belongs to the GatC family. As to quaternary structure, heterotrimer of A, B and C subunits.

It catalyses the reaction L-glutamyl-tRNA(Gln) + L-glutamine + ATP + H2O = L-glutaminyl-tRNA(Gln) + L-glutamate + ADP + phosphate + H(+). The catalysed reaction is L-aspartyl-tRNA(Asn) + L-glutamine + ATP + H2O = L-asparaginyl-tRNA(Asn) + L-glutamate + ADP + phosphate + 2 H(+). Allows the formation of correctly charged Asn-tRNA(Asn) or Gln-tRNA(Gln) through the transamidation of misacylated Asp-tRNA(Asn) or Glu-tRNA(Gln) in organisms which lack either or both of asparaginyl-tRNA or glutaminyl-tRNA synthetases. The reaction takes place in the presence of glutamine and ATP through an activated phospho-Asp-tRNA(Asn) or phospho-Glu-tRNA(Gln). This is Aspartyl/glutamyl-tRNA(Asn/Gln) amidotransferase subunit C from Ruthia magnifica subsp. Calyptogena magnifica.